The following is an 876-amino-acid chain: Leucine--tRNA ligase (876 aa).

The 'HIGH' region signature appears at 43–53 (PYPSGRIHMGH). Residues 632–636 (KMSKS) carry the 'KMSKS' region motif. Lysine 635 lines the ATP pocket.

This sequence belongs to the class-I aminoacyl-tRNA synthetase family.

The protein resides in the cytoplasm. It catalyses the reaction tRNA(Leu) + L-leucine + ATP = L-leucyl-tRNA(Leu) + AMP + diphosphate. The chain is Leucine--tRNA ligase from Sinorhizobium fredii (strain NBRC 101917 / NGR234).